Reading from the N-terminus, the 96-residue chain is Small ribosomal subunit protein bS18 (96 aa).

Residues 1-22 show a composition bias toward basic and acidic residues; sequence MYKDIDSHQRDSRTDGHQDGFK. The disordered stretch occupies residues 1–25; it reads MYKDIDSHQRDSRTDGHQDGFKKNP.

It belongs to the bacterial ribosomal protein bS18 family. Part of the 30S ribosomal subunit. Forms a tight heterodimer with protein bS6.

Its function is as follows. Binds as a heterodimer with protein bS6 to the central domain of the 16S rRNA, where it helps stabilize the platform of the 30S subunit. This is Small ribosomal subunit protein bS18 from Borrelia duttonii (strain Ly).